The following is a 229-amino-acid chain: Ribonuclease 3 (229 aa).

The 123-residue stretch at 5-127 (LDRLERKLGY…LIGAIYQDAD (123 aa)) folds into the RNase III domain. Position 40 (glutamate 40) interacts with Mg(2+). Residue aspartate 44 is part of the active site. Aspartate 113 and glutamate 116 together coordinate Mg(2+). Residue glutamate 116 is part of the active site. Residues 154 to 224 (DPKTRLQEFL…AAAALIALGV (71 aa)) form the DRBM domain.

The protein belongs to the ribonuclease III family. Homodimer. Mg(2+) is required as a cofactor.

The protein resides in the cytoplasm. It catalyses the reaction Endonucleolytic cleavage to 5'-phosphomonoester.. Its function is as follows. Digests double-stranded RNA. Involved in the processing of primary rRNA transcript to yield the immediate precursors to the large and small rRNAs (23S and 16S). Processes some mRNAs, and tRNAs when they are encoded in the rRNA operon. Processes pre-crRNA and tracrRNA of type II CRISPR loci if present in the organism. This chain is Ribonuclease 3, found in Pseudomonas entomophila (strain L48).